The primary structure comprises 316 residues: Ribosomal RNA small subunit methyltransferase H (316 aa).

Residues 35-37 (GGH), Asp-55, Phe-80, Asp-102, and Gln-109 each bind S-adenosyl-L-methionine.

This sequence belongs to the methyltransferase superfamily. RsmH family.

The protein localises to the cytoplasm. The enzyme catalyses cytidine(1402) in 16S rRNA + S-adenosyl-L-methionine = N(4)-methylcytidine(1402) in 16S rRNA + S-adenosyl-L-homocysteine + H(+). Its function is as follows. Specifically methylates the N4 position of cytidine in position 1402 (C1402) of 16S rRNA. In Colwellia psychrerythraea (strain 34H / ATCC BAA-681) (Vibrio psychroerythus), this protein is Ribosomal RNA small subunit methyltransferase H.